The sequence spans 82 residues: Putative antimicrobial peptide 7848 (82 aa).

The first 17 residues, 1–17 (MNENLWAAPAPKKLSKH), serve as a signal peptide directing secretion. The tract at residues 16–60 (KHFFGRGGPLGKETGPNLFPKKPGAGKGLGFPPTKKPRGQPRVLK) is disordered. A propeptide spanning residues 38-82 (PGAGKGLGFPPTKKPRGQPRVLKKPKWNSEGLIGILHRGSDGVQF) is cleaved from the precursor. The segment covering 50 to 60 (KKPRGQPRVLK) has biased composition (basic residues).

It belongs to the non-disulfide-bridged peptide (NDBP) superfamily. Short antimicrobial peptide (group 4) family. Expressed by the venom gland.

The protein localises to the secreted. The protein is Putative antimicrobial peptide 7848 of Urodacus yaschenkoi (Inland robust scorpion).